Consider the following 176-residue polypeptide: NAD(P)H-quinone oxidoreductase subunit 6, chloroplastic (176 aa).

Helical transmembrane passes span 10 to 30 (FLLV…VLLP), 32 to 52 (PIYS…FYIL), 61 to 81 (AQLL…VMFM), 92 to 112 (LWTV…ISLI), and 152 to 172 (FFLP…GAIA).

Belongs to the complex I subunit 6 family. As to quaternary structure, NDH is composed of at least 16 different subunits, 5 of which are encoded in the nucleus.

The protein resides in the plastid. The protein localises to the chloroplast thylakoid membrane. The catalysed reaction is a plastoquinone + NADH + (n+1) H(+)(in) = a plastoquinol + NAD(+) + n H(+)(out). It catalyses the reaction a plastoquinone + NADPH + (n+1) H(+)(in) = a plastoquinol + NADP(+) + n H(+)(out). Functionally, NDH shuttles electrons from NAD(P)H:plastoquinone, via FMN and iron-sulfur (Fe-S) centers, to quinones in the photosynthetic chain and possibly in a chloroplast respiratory chain. The immediate electron acceptor for the enzyme in this species is believed to be plastoquinone. Couples the redox reaction to proton translocation, and thus conserves the redox energy in a proton gradient. The sequence is that of NAD(P)H-quinone oxidoreductase subunit 6, chloroplastic (ndhG) from Solanum lycopersicum (Tomato).